A 403-amino-acid polypeptide reads, in one-letter code: RILP-like protein 1 (403 aa).

S7 is subject to Phosphoserine. The RH1 domain occupies 10–97 (AAESALEKNV…RLERMDRIEK (88 aa)). C47 carries the S-nitrosocysteine modification. A coiled-coil region spans residues 76 to 258 (ELDELRLELD…KLRERLQGEH (183 aa)). 3 disordered regions span residues 254-275 (LQGE…GEES), 327-352 (EMEE…PESG), and 384-403 (ANTH…LQHL). Position 259 is a phosphoserine (S259). The segment covering 262 to 275 (GEEEPETEPVGEES) has biased composition (acidic residues). Residues 291–356 (RPRFTLQELR…PQPESGIKRL (66 aa)) enclose the RH2 domain. The segment covering 394–403 (EQGQEALQHL) has biased composition (polar residues).

Belongs to the RILPL family. In terms of assembly, interacts (when S-nitrosylated) with GAPDH. Interacts with RAB8A; interaction is dependent on the phosphorylation of 'Thr-72' of RAB8A. Interacts with RAB10 and RAB12; the interaction is dependent on the phosphorylation of 'Thr-73' of RAB10, and 'Ser-105' of RAB12. S-nitrosylation is required for the interaction with GAPDH. As to expression, widely expressed. Expressed at lower level in liver and kidney.

Its subcellular location is the cytoplasm. It localises to the cytosol. It is found in the cytoskeleton. The protein localises to the microtubule organizing center. The protein resides in the centrosome. Its subcellular location is the centriole. It localises to the cilium basal body. Its function is as follows. Plays a role in the regulation of cell shape and polarity. Plays a role in cellular protein transport, including protein transport away from primary cilia. Neuroprotective protein, which acts by sequestring GAPDH in the cytosol and prevent the apoptotic function of GAPDH in the nucleus. Competes with SIAH1 for binding GAPDH. Does not regulate lysosomal morphology and distribution. Binds to RAB10 following LRRK2-mediated RAB10 phosphorylation which leads to inhibition of ciliogenesis. This chain is RILP-like protein 1 (RILPL1), found in Homo sapiens (Human).